We begin with the raw amino-acid sequence, 175 residues long: Succinate dehydrogenase assembly factor 2, mitochondrial (175 aa).

A disordered region spans residues 42 to 71 (PFSDPELAHANNSLPSNSEEWPLPEPLDRT). Residues 51–60 (ANNSLPSNSE) are compositionally biased toward polar residues.

It belongs to the SDHAF2 family. In terms of assembly, interacts with the flavoprotein subunit within the SDH catalytic dimer.

The protein resides in the mitochondrion matrix. Plays an essential role in the assembly of succinate dehydrogenase (SDH), an enzyme complex (also referred to as respiratory complex II) that is a component of both the tricarboxylic acid (TCA) cycle and the mitochondrial electron transport chain, and which couples the oxidation of succinate to fumarate with the reduction of ubiquinone (coenzyme Q) to ubiquinol. Required for flavinylation (covalent attachment of FAD) of the flavoprotein subunit of the SDH catalytic dimer. The polypeptide is Succinate dehydrogenase assembly factor 2, mitochondrial (Cryptococcus neoformans var. neoformans serotype D (strain B-3501A) (Filobasidiella neoformans)).